Consider the following 543-residue polypeptide: Protein male-specific lethal-3 (543 aa).

A Chromo domain is found at 10-90 (LFNRGEKVLC…KLQRELAEAA (81 aa)). Positions 93–247 (QKTGGYSYKD…THTTDAEKRI (155 aa)) are disordered. 3 stretches are compositionally biased toward basic and acidic residues: residues 180 to 202 (RSRD…DNSS), 210 to 224 (KSKG…ERRS), and 234 to 247 (SPKD…EKRI). In terms of domain architecture, MRG spans 249-542 (QEDRVMLRIS…PLIDQGRELS (294 aa)).

Component of the male-specific lethal (MSL) histone acetyltransferase complex, composed of mof, mle, msl-1, msl-2 and msl-3 proteins, as well as roX1 and roX2 non-coding RNAs. Ubiquitinated by msl-2.

It localises to the nucleus. The protein resides in the chromosome. Its function is as follows. Component of the male-specific lethal (MSL) histone acetyltransferase complex, a multiprotein complex essential for elevating transcription of the single X chromosome in the male (X chromosome dosage compensation). The MSL complex specifically associates with the single X chromosome in males and mediates formation of H4K16ac, promoting a two-fold activation of X chromosome. Acts as a histone reader that specifically recognizes and binds histone H3 trimethylated at 'Lys-36' (H3K36me3) and histone H4 monomethylated at 'Lys-20' (H4K20me1). Within the MSL complex, mediates the spreading of the MSL complex from initiation sites on the male X chromosome to flanking chromatin. Following initial recruitment of the MSL complex to male X chromosome by msl-2, msl-3 binds H3K36me3 and promotes spreading of the MSL complex in cis. In addition to its role in dosage compensation in males, promotes germline stem cell differentiation in females: recognizes and binds H3K36me3, promoting recruitment of the ATAC complex and transcription of genes, such as RpS19b. In Drosophila virilis (Fruit fly), this protein is Protein male-specific lethal-3 (msl-3).